A 929-amino-acid chain; its full sequence is Facilitated trehalose transporter Tret1 (929 aa).

Residues 1–275 are disordered; that stretch reads MSGRDNRAAG…VGYQQQKATS (275 aa). The Cytoplasmic segment spans residues 1-462; sequence MSGRDNRAAG…LEVYRPTTNP (462 aa). Residues 10-26 show a composition bias toward gly residues; sequence GAGGGSGGGGGGGGGGG. Positions 41–59 are enriched in basic and acidic residues; it reads KLKEKLTRAGEELGYHRVE. Residues 60–72 are compositionally biased toward polar residues; it reads SNLSASNTATSLD. 3 stretches are compositionally biased toward low complexity: residues 85 to 141, 168 to 178, and 237 to 254; these read AAPQ…QPLR, QEIQQQQLQQQ, and SNSN…VAAD. 3 positions are modified to phosphoserine: Ser320, Ser321, and Ser322. The tract at residues 352-371 is disordered; sequence VLHGSSTDSDEEGEDAEHKR. Residues Ser392 and Ser394 each carry the phosphoserine modification. Residues 398 to 420 form a disordered region; it reads FLSSRQNFQQQRSISTDSRKSRR. Residues 402 to 413 are compositionally biased toward polar residues; it reads RQNFQQQRSIST. The chain crosses the membrane as a helical span at residues 463 to 483; sequence IYIWTQVLAALSVSLGSLVVG. The Extracellular segment spans residues 484 to 512; sequence FSSAYTSPALVSMTDRNLTSFDVSTEDAS. Asn500 is a glycosylation site (N-linked (GlcNAc...) asparagine). The chain crosses the membrane as a helical span at residues 513–533; the sequence is WVGGIMPLAGLAGGIAGGPLI. At 534–541 the chain is on the cytoplasmic side; that stretch reads EYLGRRNT. A helical membrane pass occupies residues 542-562; sequence ILATAVPFIISWLLIACAVNV. The Extracellular portion of the chain corresponds to 563–569; that stretch reads PMVLSGR. The helical transmembrane segment at 570–590 threads the bilayer; the sequence is FLAGFCVGIASLSLPVYLGET. The Cytoplasmic portion of the chain corresponds to 591–596; sequence VQPEVR. Residues 597 to 617 form a helical membrane-spanning segment; sequence GTLGLLPTAFGNIGILLCFIA. The Extracellular portion of the chain corresponds to 618-624; sequence GTYMDWS. Residues 625-645 traverse the membrane as a helical segment; that stretch reads MLAFLGGALPVPFLILMFLIP. Over 646–708 the chain is Cytoplasmic; the sequence is ETPRWYVSRG…ELLKRSNLKP (63 aa). Residues 709–729 traverse the membrane as a helical segment; sequence LSISLGLMFFQQLSGINAVIF. Residues 730 to 745 lie on the Extracellular side of the membrane; it reads YTVQIFKDAGSTLDGN. A helical transmembrane segment spans residues 746 to 766; it reads VCTIIVGTVNFIATFIGILLI. Residues 767–772 lie on the Cytoplasmic side of the membrane; it reads DRAGRK. The helical transmembrane segment at 773–793 threads the bilayer; sequence ILLYVSNIAMILTLFVLGGFF. Residues 794–804 lie on the Extracellular side of the membrane; sequence YCKANGMDVSN. Residues 805-825 form a helical membrane-spanning segment; the sequence is VGLLPLCCFVVYILGFSLGFG. Residues 826 to 839 lie on the Cytoplasmic side of the membrane; the sequence is PIPWLMMGEILPAK. Residues 840–860 form a helical membrane-spanning segment; sequence IRGSAASVATAFNWTCTFVVT. Residues 861-873 lie on the Extracellular side of the membrane; that stretch reads KSFLDMIKLIGAH. The chain crosses the membrane as a helical span at residues 874–894; that stretch reads GAFWLFGVICCIGMFFVIFCV. Residues 895–929 lie on the Cytoplasmic side of the membrane; that stretch reads PETQGKTLEDIERKMMGRVRRMSSVANIKPLSFNM. Ser917 and Ser918 each carry phosphoserine.

This sequence belongs to the major facilitator superfamily. Sugar transporter (TC 2.A.1.1) family. Trehalose transporter subfamily.

It is found in the cell membrane. Its function is as follows. Low-capacity facilitative transporter for trehalose. Does not transport maltose, sucrose or lactose. Mediates the bidirectional transfer of trehalose. Responsible for the transport of trehalose synthesized in the fat body and the incorporation of trehalose into other tissues that require a carbon source, thereby regulating trehalose levels in the hemolymph. This is Facilitated trehalose transporter Tret1 from Drosophila grimshawi (Hawaiian fruit fly).